A 155-amino-acid chain; its full sequence is 6,7-dimethyl-8-ribityllumazine synthase (155 aa).

Residues F22, 56–58, and 80–82 each bind 5-amino-6-(D-ribitylamino)uracil; these read AFE and AVI. 85–86 provides a ligand contact to (2S)-2-hydroxy-3-oxobutyl phosphate; sequence ST. Catalysis depends on H88, which acts as the Proton donor. Residue F113 participates in 5-amino-6-(D-ribitylamino)uracil binding. A (2S)-2-hydroxy-3-oxobutyl phosphate-binding site is contributed by R127.

The protein belongs to the DMRL synthase family.

The catalysed reaction is (2S)-2-hydroxy-3-oxobutyl phosphate + 5-amino-6-(D-ribitylamino)uracil = 6,7-dimethyl-8-(1-D-ribityl)lumazine + phosphate + 2 H2O + H(+). The protein operates within cofactor biosynthesis; riboflavin biosynthesis; riboflavin from 2-hydroxy-3-oxobutyl phosphate and 5-amino-6-(D-ribitylamino)uracil: step 1/2. Catalyzes the formation of 6,7-dimethyl-8-ribityllumazine by condensation of 5-amino-6-(D-ribitylamino)uracil with 3,4-dihydroxy-2-butanone 4-phosphate. This is the penultimate step in the biosynthesis of riboflavin. This is 6,7-dimethyl-8-ribityllumazine synthase from Bifidobacterium longum subsp. infantis (strain ATCC 15697 / DSM 20088 / JCM 1222 / NCTC 11817 / S12).